The following is a 143-amino-acid chain: Transcriptional regulator MraZ (143 aa).

SpoVT-AbrB domains are found at residues 5–47 and 76–119; these read EFRH…PMKE and ATEC…DEAR.

The protein belongs to the MraZ family. In terms of assembly, forms oligomers.

The protein resides in the cytoplasm. It is found in the nucleoid. In Enterococcus hirae, this protein is Transcriptional regulator MraZ.